The sequence spans 409 residues: S-adenosylmethionine synthase (409 aa).

An ATP-binding site is contributed by His-15. Asp-17 is a binding site for Mg(2+). Glu-43 contributes to the K(+) binding site. Positions 56 and 100 each coordinate L-methionine. The segment at 100-110 is flexible loop; sequence QSSDIAQGVNE. ATP contacts are provided by residues 171 to 173, 248 to 249, Asp-257, 263 to 264, Ala-280, and Lys-284; these read DGK, KF, and RK. Asp-257 is an L-methionine binding site. Position 288 (Lys-288) interacts with L-methionine.

This sequence belongs to the AdoMet synthase family. Homotetramer; dimer of dimers. Mg(2+) serves as cofactor. Requires K(+) as cofactor.

Its subcellular location is the cytoplasm. It catalyses the reaction L-methionine + ATP + H2O = S-adenosyl-L-methionine + phosphate + diphosphate. It participates in amino-acid biosynthesis; S-adenosyl-L-methionine biosynthesis; S-adenosyl-L-methionine from L-methionine: step 1/1. Catalyzes the formation of S-adenosylmethionine (AdoMet) from methionine and ATP. The overall synthetic reaction is composed of two sequential steps, AdoMet formation and the subsequent tripolyphosphate hydrolysis which occurs prior to release of AdoMet from the enzyme. In Prochlorococcus marinus (strain NATL2A), this protein is S-adenosylmethionine synthase.